The primary structure comprises 1891 residues: Endoribonuclease Dicer-L (1891 aa).

Residues 41–217 form the Helicase ATP-binding domain; it reads LLEAALDHNT…DLEEKIQKLE (177 aa). 54-61 contacts ATP; it reads LNSGSGKT. Residues 165–168 carry the DECH box motif; that stretch reads DECH. The 170-residue stretch at 425–594 folds into the Helicase C-terminal domain; the sequence is SFPSPFTNIL…SIDCGNTESE (170 aa). The region spanning 622-714 is the Dicer dsRNA-binding fold domain; that stretch reads AIGHINRYCA…MPVGKETVKY (93 aa). The 148-residue stretch at 887–1034 folds into the PAZ domain; that stretch reads KFVEDIEKSE…LVPELCAIHP (148 aa). RNase III domains are found at residues 1248-1379 and 1635-1793; these read TSDM…ETSG and FENF…MDSG. Residues E1292, D1370, E1373, E1674, D1779, and E1782 each coordinate Mg(2+). In terms of domain architecture, DRBM spans 1818 to 1883; that stretch reads VPRSPVRELL…ARRALRSLKA (66 aa).

It belongs to the helicase family. Dicer subfamily. In terms of assembly, component of the RISC loading complex (RLC), or micro-RNA (miRNA) loading complex (miRLC), which is composed of dicer1, ago2 and tarbp2; dicer1 and tarbp2 are required to process precursor miRNAs (pre-miRNAs) to mature miRNAs and then load them onto ago2. Note that the trimeric RLC/miRLC is also referred to as RISC. Requires Mg(2+) as cofactor. Mn(2+) serves as cofactor.

Its subcellular location is the cytoplasm. It carries out the reaction Endonucleolytic cleavage to 5'-phosphomonoester.. Functionally, double-stranded RNA (dsRNA) endoribonuclease playing a central role in short dsRNA-mediated post-transcriptional gene silencing. Cleaves naturally occurring long dsRNAs and short hairpin pre-microRNAs (miRNA) into fragments of 21 to 23 nucleotides with 3' overhang of two nucleotides, producing respectively short interfering RNAs (siRNA) and mature microRNAs. SiRNAs and miRNAs serve as guide to direct the RNA-induced silencing complex (RISC) to complementary RNAs to degrade them or prevent their translation. Gene silencing mediated by siRNAs, also called RNA interference, controls the elimination of transcripts from mobile and repetitive DNA elements of the genome but also the degradation of exogenous RNA of viral origin for instance. The miRNA pathway on the other side is a mean to specifically regulate the expression of target genes. During embryonic development, at the left-right organizer, post-transcriptionally regulates the expression of dand5 in flow sensor cells. In post-flow stages, acts along with Bicc1 to repress dand5 mRNA translation and decay. Decreased Dand5 expression lifts repression of Nodal and defines leftness by induction of the lateral plate mesoderm Nodal signaling cascade. The polypeptide is Endoribonuclease Dicer-L (dicer1.L) (Xenopus laevis (African clawed frog)).